The following is a 70-amino-acid chain: Brevinin-1S (70 aa).

The signal sequence occupies residues 1–22 (MFTLKKSLLLLFFLGTINLSLC). Positions 23–44 (EEERNAEEERRDDPEERDVEVE) are excised as a propeptide. Cys64 and Cys70 form a disulfide bridge.

This sequence belongs to the frog skin active peptide (FSAP) family. Brevinin subfamily. Expressed by the skin glands.

It is found in the secreted. Antimicrobial peptide. The polypeptide is Brevinin-1S (Odorrana schmackeri (Schmacker's frog)).